A 66-amino-acid chain; its full sequence is Ocellatin-PT5 (66 aa).

A signal peptide spans 1-22 (MAFLKKSLFLVLFLGLVSLSIC). The propeptide occupies 23 to 39 (DEEKRQDEDDDDDDDEE). Residue Val66 is modified to Valine amide.

In terms of tissue distribution, expressed by the skin glands.

It is found in the secreted. Its function is as follows. Has antibacterial activity against Gram-negative bacterium E.coli ATCC 25922 (MIC=300 uM) but not against S.pneumoniae ATCC 700603, S.choleraesuis ATCC 14028 or Gram-positive bacterium S.aureus ATCC 29313. Shows very little hemolytic activity and no cytotoxicity. The polypeptide is Ocellatin-PT5 (Leptodactylus pustulatus (Ceara white-lipped frog)).